A 725-amino-acid chain; its full sequence is Methionine--tRNA ligase (725 aa).

Positions 27 to 37 (PYANGQIHIGH) match the 'HIGH' region motif. Zn(2+) is bound by residues Cys-158, Cys-161, Cys-171, and Cys-174. A 'KMSKS' region motif is present at residues 348–352 (KMSKS). Position 351 (Lys-351) interacts with ATP. One can recognise a tRNA-binding domain in the interval 619 to 725 (DFAKIDLRIA…SGAKPGMRVK (107 aa)).

The protein belongs to the class-I aminoacyl-tRNA synthetase family. MetG type 1 subfamily. Homodimer. The cofactor is Zn(2+).

Its subcellular location is the cytoplasm. The enzyme catalyses tRNA(Met) + L-methionine + ATP = L-methionyl-tRNA(Met) + AMP + diphosphate. Is required not only for elongation of protein synthesis but also for the initiation of all mRNA translation through initiator tRNA(fMet) aminoacylation. This chain is Methionine--tRNA ligase, found in Burkholderia mallei (strain NCTC 10247).